A 319-amino-acid polypeptide reads, in one-letter code: Methionyl-tRNA formyltransferase (319 aa).

112 to 115 (SLLP) serves as a coordination point for (6S)-5,6,7,8-tetrahydrofolate.

The protein belongs to the Fmt family.

The catalysed reaction is L-methionyl-tRNA(fMet) + (6R)-10-formyltetrahydrofolate = N-formyl-L-methionyl-tRNA(fMet) + (6S)-5,6,7,8-tetrahydrofolate + H(+). In terms of biological role, attaches a formyl group to the free amino group of methionyl-tRNA(fMet). The formyl group appears to play a dual role in the initiator identity of N-formylmethionyl-tRNA by promoting its recognition by IF2 and preventing the misappropriation of this tRNA by the elongation apparatus. This chain is Methionyl-tRNA formyltransferase, found in Pelobacter propionicus (strain DSM 2379 / NBRC 103807 / OttBd1).